A 429-amino-acid polypeptide reads, in one-letter code: Putative GMP synthase [glutamine-hydrolyzing] (429 aa).

Residues 10 to 118 (TIFILDFGSQ…GYTPIHLYPC (109 aa)) enclose the Glutamine amidotransferase type-1 domain. Catalysis depends on C87, which acts as the Nucleophile. Positions 119-304 (ELFKHIVDCE…LGLSSYLLDR (186 aa)) constitute a GMPS ATP-PPase domain. Active-site residues include H176 and E178.

In terms of assembly, homodimer.

It carries out the reaction XMP + L-glutamine + ATP + H2O = GMP + L-glutamate + AMP + diphosphate + 2 H(+). Its pathway is purine metabolism; GMP biosynthesis; GMP from XMP (L-Gln route): step 1/1. In terms of biological role, catalyzes the synthesis of GMP from XMP. The polypeptide is Putative GMP synthase [glutamine-hydrolyzing] (guaA) (Chlamydia pneumoniae (Chlamydophila pneumoniae)).